Reading from the N-terminus, the 257-residue chain is Snake venom serine protease BITS01A (257 aa).

Positions 1-18 are cleaved as a signal peptide; sequence MVLIRVIANLLILQVSYA. Positions 19–24 are excised as a propeptide; that stretch reads QKSSEL. Positions 25 to 248 constitute a Peptidase S1 domain; sequence VVGGDECDIN…YLPWIQSIIA (224 aa). 6 disulfide bridges follow: cysteine 31/cysteine 162, cysteine 49/cysteine 65, cysteine 97/cysteine 255, cysteine 141/cysteine 209, cysteine 173/cysteine 188, and cysteine 199/cysteine 224. Histidine 64 serves as the catalytic Charge relay system. The N-linked (GlcNAc...) asparagine glycan is linked to asparagine 101. Aspartate 109 functions as the Charge relay system in the catalytic mechanism. N-linked (GlcNAc...) asparagine glycosylation is found at asparagine 121, asparagine 153, and asparagine 169. Catalysis depends on serine 203, which acts as the Charge relay system. 2 N-linked (GlcNAc...) asparagine glycosylation sites follow: asparagine 210 and asparagine 250.

This sequence belongs to the peptidase S1 family. Snake venom subfamily. As to quaternary structure, monomer. As to expression, expressed by the venom gland.

The protein localises to the secreted. Snake venom serine protease that may act in the hemostasis system of the prey. The chain is Snake venom serine protease BITS01A from Bothrops insularis (Golden lancehead).